The chain runs to 430 residues: Glutamate-1-semialdehyde 2,1-aminomutase (430 aa).

Residue Lys268 is modified to N6-(pyridoxal phosphate)lysine.

The protein belongs to the class-III pyridoxal-phosphate-dependent aminotransferase family. HemL subfamily. As to quaternary structure, homodimer. It depends on pyridoxal 5'-phosphate as a cofactor.

The protein resides in the cytoplasm. It carries out the reaction (S)-4-amino-5-oxopentanoate = 5-aminolevulinate. The protein operates within porphyrin-containing compound metabolism; protoporphyrin-IX biosynthesis; 5-aminolevulinate from L-glutamyl-tRNA(Glu): step 2/2. The chain is Glutamate-1-semialdehyde 2,1-aminomutase (hemL) from Bacillus subtilis (strain 168).